Reading from the N-terminus, the 243-residue chain is 2-C-methyl-D-erythritol 4-phosphate cytidylyltransferase (243 aa).

The protein belongs to the IspD/TarI cytidylyltransferase family. IspD subfamily.

It catalyses the reaction 2-C-methyl-D-erythritol 4-phosphate + CTP + H(+) = 4-CDP-2-C-methyl-D-erythritol + diphosphate. The protein operates within isoprenoid biosynthesis; isopentenyl diphosphate biosynthesis via DXP pathway; isopentenyl diphosphate from 1-deoxy-D-xylulose 5-phosphate: step 2/6. Functionally, catalyzes the formation of 4-diphosphocytidyl-2-C-methyl-D-erythritol from CTP and 2-C-methyl-D-erythritol 4-phosphate (MEP). The chain is 2-C-methyl-D-erythritol 4-phosphate cytidylyltransferase from Aeromonas hydrophila subsp. hydrophila (strain ATCC 7966 / DSM 30187 / BCRC 13018 / CCUG 14551 / JCM 1027 / KCTC 2358 / NCIMB 9240 / NCTC 8049).